The following is a 281-amino-acid chain: Probable endonuclease 4 (281 aa).

Zn(2+)-binding residues include His70, His110, Glu146, Asp180, His183, His217, Asp230, His232, and Glu262.

Belongs to the AP endonuclease 2 family. Requires Zn(2+) as cofactor.

It catalyses the reaction Endonucleolytic cleavage to 5'-phosphooligonucleotide end-products.. In terms of biological role, endonuclease IV plays a role in DNA repair. It cleaves phosphodiester bonds at apurinic or apyrimidinic (AP) sites, generating a 3'-hydroxyl group and a 5'-terminal sugar phosphate. The polypeptide is Probable endonuclease 4 (Nitratiruptor sp. (strain SB155-2)).